The sequence spans 298 residues: MSLKLDGKKLSLEIEEKLKKDIESNINSTKRPPGLAVIRIGEDPASGVYVKNKERACARVGIKSFIFHLKDTIDQKEVEQLINKLNLDNDIDGMLLQLPIPDKFDEQRLISLINPDKDVDGLNEKNIGKLVKNEPGMRSCTPAGIVNLLRSQNITIEGKKIVVVGRSLLVGKPLSLMLLNLNGTVTITHSKTINLKKICKEADILIAAAGKPNLINSSYVKDGAVIIDVGIHRLTSSDKSQTKLCGDVLLEDVIPKVYAYTPVPGGVGPMTVTMLLVNTIFSWQKQFVLLSRLSDLLP.

NADP(+) is bound by residues 165-167, Ser190, and Ile231; that span reads GRS.

Belongs to the tetrahydrofolate dehydrogenase/cyclohydrolase family. As to quaternary structure, homodimer.

It catalyses the reaction (6R)-5,10-methylene-5,6,7,8-tetrahydrofolate + NADP(+) = (6R)-5,10-methenyltetrahydrofolate + NADPH. The catalysed reaction is (6R)-5,10-methenyltetrahydrofolate + H2O = (6R)-10-formyltetrahydrofolate + H(+). It participates in one-carbon metabolism; tetrahydrofolate interconversion. In terms of biological role, catalyzes the oxidation of 5,10-methylenetetrahydrofolate to 5,10-methenyltetrahydrofolate and then the hydrolysis of 5,10-methenyltetrahydrofolate to 10-formyltetrahydrofolate. In Prochlorococcus marinus (strain MIT 9515), this protein is Bifunctional protein FolD.